The sequence spans 515 residues: Integrator complex subunit 14 (515 aa).

The region spanning 2–204 (PTVVVMDVSL…KNVQSMFGKL (203 aa)) is the VWFA domain. Ser-10, Ser-12, and Thr-86 together coordinate Mg(2+). Lys-418 carries the N6-acetyllysine modification.

This sequence belongs to the Integrator subunit 14 family. Component of the Integrator complex, composed of core subunits INTS1, INTS2, INTS3, INTS4, INTS5, INTS6, INTS7, INTS8, INTS9/RC74, INTS10, INTS11/CPSF3L, INTS12, INTS13, INTS14 and INTS15. The core complex associates with protein phosphatase 2A subunits PPP2CA and PPP2R1A, to form the Integrator-PP2A (INTAC) complex. INTS14 is part of the tail subcomplex, composed of INTS10, INTS13, INTS14 and INTS15.

It is found in the nucleus. Component of the integrator complex, a multiprotein complex that terminates RNA polymerase II (Pol II) transcription in the promoter-proximal region of genes. The integrator complex provides a quality checkpoint during transcription elongation by driving premature transcription termination of transcripts that are unfavorably configured for transcriptional elongation: the complex terminates transcription by (1) catalyzing dephosphorylation of the C-terminal domain (CTD) of Pol II subunit POLR2A/RPB1 and SUPT5H/SPT5, (2) degrading the exiting nascent RNA transcript via endonuclease activity and (3) promoting the release of Pol II from bound DNA. The integrator complex is also involved in terminating the synthesis of non-coding Pol II transcripts, such as enhancer RNAs (eRNAs), small nuclear RNAs (snRNAs), telomerase RNAs and long non-coding RNAs (lncRNAs). Within the integrator complex, INTS14 is part of the integrator tail module that acts as a platform for the recruitment of transcription factors at promoters. The chain is Integrator complex subunit 14 from Rattus norvegicus (Rat).